The sequence spans 454 residues: G-protein coupled receptor 39 (454 aa).

The Extracellular segment spans residues 1-34; that stretch reads MASPSHPSRDCSQVIDHSHVPEFEVATWIKITLI. 2 cysteine pairs are disulfide-bonded: Cys-11–Cys-191 and Cys-108–Cys-210. Residues His-17 and His-19 each coordinate Zn(2+). Residues 35-55 form a helical membrane-spanning segment; that stretch reads LVYLVIFVVGILGNSVTIRVT. The Cytoplasmic segment spans residues 56-69; sequence QVLQKKGYLQKEVT. The chain crosses the membrane as a helical span at residues 70 to 89; the sequence is DHMVSLACSDILVFLIGMPM. Residues 90-109 lie on the Extracellular side of the membrane; sequence EFYSIIWNPLTTPSYTVSCK. A helical membrane pass occupies residues 110 to 131; that stretch reads VHTFLFEACSYATLLHVLTLSF. At 132 to 151 the chain is on the cytoplasmic side; the sequence is ERYIAICHPFRYKAMSGPCQ. A helical transmembrane segment spans residues 152–172; it reads VKLLIGFVWVTSALVALPLLF. The Extracellular segment spans residues 173–217; the sequence is AMGVEYPLVNVPSHRGLICNRSRTRHQEQPESSNMSICTNLSSRW. 3 N-linked (GlcNAc...) asparagine glycosylation sites follow: Asn-192, Asn-206, and Asn-212. A helical transmembrane segment spans residues 218–242; sequence TVFQSSIFSAFVVYLVVLVSVAFMC. Residues 243-283 are Cytoplasmic-facing; the sequence is WSMMQVLRRSKQGTLAAQGQQLQLRKLESQESRSARRQTII. A helical membrane pass occupies residues 284 to 305; that stretch reads FLELIVVTLAVCWMPNQVRRIM. Topologically, residues 306–323 are extracellular; the sequence is AAAKPKHDWTKSYFRAYM. Residues 324–344 traverse the membrane as a helical segment; that stretch reads ILLPFSDTFFYLSSVVNPLLY. Residues 345–454 lie on the Cytoplasmic side of the membrane; that stretch reads NVSSQQFRSV…TRNGFQEHEV (110 aa). Residue Ser-397 is modified to Phosphoserine. Residues 415–454 are disordered; sequence HSEAKPESKPQELSCESPEPNSERKPANPATRNGFQEHEV.

This sequence belongs to the G-protein coupled receptor 1 family. As to quaternary structure, interacts with HTR1A. Interacts with GALR1. In terms of tissue distribution, detected in liver, kidney, abomasum, uterus, small intestine and colon.

The protein resides in the cell membrane. In terms of biological role, zinc-sensing receptor that can sense changes in extracellular Zn(2+), mediate Zn(2+) signal transmission, and participates in the regulation of numerous physiological processes including glucose homeostasis regulation, gastrointestinal mobility, hormone secretion and cell death. Activation by Zn(2+) in keratinocytes increases the intracellular concentration of Ca(2+) and activates the ERK/MAPK and PI3K/AKT signaling pathways leading to epithelial repair. Plays an essential role in normal wound healing by inducing the production of cytokines including the major inflammatory cytokine IL6 via the PKC/MAPK/CEBPB pathway. Regulates adipose tissue metabolism, especially lipolysis, and regulates the function of lipases, such as hormone-sensitive lipase and adipose triglyceride lipase. Plays a role in the inhibition of cell death and protects against oxidative, endoplasmic reticulum and mitochondrial stress by inducing secretion of the cytoprotective pigment epithelium-derived growth factor (PEDF) and probably other protective transcripts in a GNA13/RHOA/SRE-dependent manner. Forms dynamic heteroreceptor complexes with HTR1A and GALR1 depending on cell type or specific physiological states, resulting in signaling diversity: HTR1A-GPR39 shows additive increase in signaling along the serum response element (SRE) and NF-kappa-B pathways while GALR1 acts as an antagonist blocking SRE. This chain is G-protein coupled receptor 39 (GPR39), found in Bos taurus (Bovine).